A 196-amino-acid chain; its full sequence is Adenylate kinase (196 aa).

Position 9-17 (9-17) interacts with ATP; sequence GIPGVGKST.

This sequence belongs to the archaeal adenylate kinase family.

It is found in the cytoplasm. The enzyme catalyses AMP + ATP = 2 ADP. This Pyrococcus furiosus (strain ATCC 43587 / DSM 3638 / JCM 8422 / Vc1) protein is Adenylate kinase.